Here is a 612-residue protein sequence, read N- to C-terminus: Cytokine-like nuclear factor N-PAC (612 aa).

The region spanning 22 to 81 is the PWWP domain; the sequence is PKDLIWAKMKGFTPWPGMIVEPPLDLLTQQRRANTKCVFFFGSRNFAWIEENNIKPFEGP. Positions 168–270 are disordered; the sequence is AVEGENNADS…GASSSSPTAR (103 aa). Low complexity-rich tracts occupy residues 177–193 and 201–220; these read SSASPTVTAATPATAKS and AKPVSAVSATKAAKASTTKS. Positions 228-240 are enriched in polar residues; that stretch reads AHQTPTGANTSGL. Residues 276 to 279 form an interaction with histone H3 region; sequence DDLL. Positions 319–612 are dehydrogenase domain; that stretch reads RDIVPSELTF…SSAVFVRSRF (294 aa). Residues 329–343, Thr421, and Arg564 contribute to the NAD(+) site; that span reads GFLGLGMMGSTIVKD.

The protein belongs to the HIBADH-related family. NP60 subfamily. As to quaternary structure, binds to mononucleosomes. Interacts with male-specific lethal (MSL) histone acetyltransferase complex at least composed of mof, msl-1, msl-2 and msl-3.

Its subcellular location is the chromosome. In terms of biological role, nucleosome-destabilizing factor that is recruited to genes during transcriptional activation and colocalizes with a subset of trimethylated 'Lys-36' histone H3 (H3K36me3)-enriched regions. Binds DNA (in vitro). Facilitates Pol II transcription through nucleosomes. Facilitates male-specific lethal (MSL) histone acetyltransferase complex targeting to active genes on the X chromosome. Stimulates the acetylation of 'Lys-56' of nucleosomal histone H3 (H3K56ac) by nej. The protein is Cytokine-like nuclear factor N-PAC of Drosophila pseudoobscura pseudoobscura (Fruit fly).